Here is a 262-residue protein sequence, read N- to C-terminus: MDRCGAYLDTMRSTAPLVQCITNFVAMNVMANVLLAAGASPAMVHDAEESGEFAAIAQVLTINLGTPSPRWVEGMEAAARGAVAAGRPWVLDPVAVGATAFRRGLGARLLALKPTVIRGNASEILALAGAEARGKGADSADTVAAAEAAAQRLAEGSGAVVAVTGPVDFVTDGRRGIRCGNGHALMPKVTALGCSLTGIVGAFAAGQPAFEATAAGLAFFGLAGEEAARRAAGPGSFQVAFLDALHAMTPDDLDRGAKLEAA.

Met-43 contacts substrate. The ATP site is built by Arg-118 and Thr-164. Ala-191 contributes to the substrate binding site.

The protein belongs to the Thz kinase family. Requires Mg(2+) as cofactor.

It carries out the reaction 5-(2-hydroxyethyl)-4-methylthiazole + ATP = 4-methyl-5-(2-phosphooxyethyl)-thiazole + ADP + H(+). The protein operates within cofactor biosynthesis; thiamine diphosphate biosynthesis; 4-methyl-5-(2-phosphoethyl)-thiazole from 5-(2-hydroxyethyl)-4-methylthiazole: step 1/1. Its function is as follows. Catalyzes the phosphorylation of the hydroxyl group of 4-methyl-5-beta-hydroxyethylthiazole (THZ). This chain is Hydroxyethylthiazole kinase, found in Cereibacter sphaeroides (strain ATCC 17025 / ATH 2.4.3) (Rhodobacter sphaeroides).